Reading from the N-terminus, the 185-residue chain is TRAF-interacting protein with FHA domain-containing protein A (185 aa).

Threonine 9 is subject to Phosphothreonine. The FHA domain maps to 48–104 (VKFGRNSNMCQYTFQDKQVSRVQFALQPFKQFNSSVLSFEIKNMSKKTSLMVDNQEL).

Belongs to the TIFA family. In terms of assembly, homooligomer; homooligomerizes following phosphorylation at Thr-9. Interacts with IRAK1, TRAF2 and TRAF6. Interacts with TIFAB; binding to TIFAB inhibits TRAF6 activation, possibly by inducing a conformational change in TIFA. Interacts with ZCCHC11; binding to ZCCHC11 suppresses the TRAF6-dependent activation of NF-kappa-B. In terms of processing, phosphorylated at Thr-9 following detection of ADP-D-glycero-beta-D-manno-heptose (ADP-Heptose) by ALPK1. Phosphorylation at Thr-9 by ALPK1 leads to the formation of an intermolecular binding between the FHA domain and phosphorylated Thr-9, promoting TIFA oligomerization and TIFA-mediated NF-kappa-B activation.

It is found in the cytoplasm. In terms of biological role, adapter molecule that plays a key role in the activation of pro-inflammatory NF-kappa-B signaling following detection of bacterial pathogen-associated molecular pattern metabolites (PAMPs). Promotes activation of an innate immune response by inducing the oligomerization and polyubiquitination of TRAF6, which leads to the activation of TAK1 and IKK through a proteasome-independent mechanism. TIFA-dependent innate immune response is triggered by ADP-D-glycero-beta-D-manno-heptose (ADP-Heptose), a potent PAMP present in all Gram-negative and some Gram-positive bacteria: ADP-Heptose is recognized by ALPK1, which phosphorylates TIFA at Thr-9, leading to TIFA homooligomerization and subsequent activation of pro-inflammatory NF-kappa-B signaling. The protein is TRAF-interacting protein with FHA domain-containing protein A of Rattus norvegicus (Rat).